The chain runs to 89 residues: STLNVLRYSSLAAGIVYGAYHTYTLKLEGEKKQELYDYQKKLKLVEAAKAEYRKLNPPKQAASTEAVNLDDPEFDFGKFILGAVEKLGS.

N-acetylserine is present on serine 1. Residues 8 to 25 (YSSLAAGIVYGAYHTYTL) traverse the membrane as a helical segment.

As to quaternary structure, F-type ATP synthases have 2 components, the catalytic core F(1) and the membrane-embedded component F(0), linked together by a central stalk and a peripheral stalk. The central stalk, also called rotor shaft, is often seen as part of F(1). The peripheral stalk is seen as part of F(0). F(0) contains the membrane channel next to the rotor. F-type ATP synthases form dimers but each monomer functions independently in ATP generation. The dimer consists of 18 different polypeptides: ATP1 (subunit alpha, part of F(1), 3 molecules per monomer), ATP2 (subunit beta, part of F(1), 3 molecules per monomer), ATP3 (subunit gamma, part of the central stalk), ATP4 (subunit b, part of the peripheral stalk), ATP5/OSCP (subunit 5/OSCP, part of the peripheral stalk), ATP6 (subunit a, part of the peripheral stalk), ATP7 (subunit d, part of the peripheral stalk), ATP8 (subunit 8, part of the peripheral stalk), OLI1 (subunit c, part of the rotor, 10 molecules per monomer), ATP14 (subunit h, part of the peripheral stalk), ATP15 (subunit epsilon, part of the central stalk), ATP16 (subunit delta, part of the central stalk), ATP17 (subunit f, part of the peripheral stalk), ATP18 (subunit i/j, part of the peripheral stalk). Dimer-specific subunits are ATP19 (subunit k, at interface between monomers), ATP20 (subunit g, at interface between monomers), TIM11 (subunit e, at interface between monomers). Also contains subunit L.

The protein resides in the mitochondrion inner membrane. Functionally, mitochondrial membrane ATP synthase (F(1)F(0) ATP synthase or Complex V) produces ATP from ADP in the presence of a proton gradient across the membrane which is generated by electron transport complexes of the respiratory chain. F-type ATP synthases consist of two structural domains, F(1) - containing the extramembraneous catalytic core, and F(0) - containing the membrane proton channel, linked together by a central stalk and a peripheral stalk. During catalysis, ATP synthesis in the catalytic domain of F(1) is coupled via a rotary mechanism of the central stalk subunits to proton translocation. Part of the complex F(0) domain. Minor subunit located with subunit a/ATP6 in the membrane. Together with subunit g/ATP20, probably contributes to membrane curvature at the site of the ATP synthase dimer, ultimately contributing to formation of cristae. This chain is ATP synthase subunit e, mitochondrial, found in Pichia angusta (Yeast).